Reading from the N-terminus, the 124-residue chain is Competence protein ComGG (124 aa).

A signal peptide spans 1 to 28; it reads MYRTRGFIYPAVLFVSALVLLIVNFVAA.

As to quaternary structure, the transformation pili are flexible filaments, consisting mainly of the major pilin ComGC and smaller amounts of the minor pilins, including at least ComGD, ComGF and ComGG. Interacts with ComGC; the interaction is probably direct. Interacts with ComGD. Interacts with ComGF. May act as a link between ComGC, ComGD and ComGF. Homodimer; disulfide-linked. A minor fraction of ComGG is found as a disulfide-bonded homodimer. In terms of processing, partial processing of ComGG in competent cells requires ComC.

Its subcellular location is the cell membrane. The protein resides in the secreted. Required for formation of the type IV-like pilus (T4P) that plays a role in transformation. Transformation pili are dynamically extended and retracted, perhaps thereby promoting DNA uptake and transformation. Required for transformation and DNA binding. This chain is Competence protein ComGG (comGG), found in Bacillus subtilis (strain 168).